Consider the following 86-residue polypeptide: uncharacterized protein (86 aa).

This sequence to M.jannaschii MJ1173.

This is an uncharacterized protein from Methanosarcina mazei (strain ATCC BAA-159 / DSM 3647 / Goe1 / Go1 / JCM 11833 / OCM 88) (Methanosarcina frisia).